Consider the following 651-residue polypeptide: Protein SCARECROW 1 (651 aa).

Disordered stretches follow at residues 1 to 33 (MGSSSLLLFPSSSSSATHSSYSPSSSSHAITSL) and 188 to 277 (SDPA…KQRD). Positions 190–228 (PAPPPPPPPSHPALLPPDATAPPPPPTSVAALPPPPPPQ) are enriched in pro residues. A coiled-coil region spans residues 253 to 280 (TAEETAAAAAAAKERKEEQRRKQRDEEG). The span at 254-263 (AEETAAAAAA) shows a compositional bias: low complexity. A compositionally biased stretch (basic and acidic residues) spans 264–277 (AKERKEEQRRKQRD). One can recognise a GRAS domain in the interval 274–644 (KQRDEEGLHL…LCLLTASAWR (371 aa)). Positions 281–345 (LHLLTLLLQC…VSSCLGLYAP (65 aa)) are leucine repeat I (LRI). The LxCxE motif motif lies at 288-292 (LQCAE). Residues 364 to 429 (FQVFNGISPF…GGPPRVRLTG (66 aa)) are VHIID. The VHIID motif lies at 395 to 399 (VHIID). Residues 439–471 (ATGKRLSDFADTLGLPFEFCPVADKAGNLDPEK) form a leucine repeat II (LRII) region. The interval 480-567 (VAVHWLRHSL…QQLLSREIRN (88 aa)) is PFYRE. Residues 570 to 644 (AVGGPARTGD…LCLLTASAWR (75 aa)) are SAW.

The protein belongs to the GRAS family. As to quaternary structure, interacts with SHR1, but not with SHR2. In terms of tissue distribution, expressed in the initial daughter cell before its asymmetric division and remains expressed in the endodermal cell layer after the division.

The protein resides in the nucleus. Functionally, transcription factor required for quiescent center cells specification and maintenance of surrounding stem cells, and for the asymmetric cell division involved in radial pattern formation in roots. Essential for cell division but not differentiation of the ground tissue. Regulates the radial organization of the shoot axial organs. Restricts SHR movment and sequesters it into the nucleus of the endodermis. The sequence is that of Protein SCARECROW 1 (SCR1) from Oryza sativa subsp. japonica (Rice).